Reading from the N-terminus, the 555-residue chain is E3 ubiquitin-protein ligase NEURL1B (555 aa).

Positions Ala38–Ser194 constitute an NHR 1 domain. Thr199 is modified (phosphothreonine). Residues Asp279–Gly433 form the NHR 2 domain. Residues Gln436–Pro493 form a disordered region. Residues Ser462 to Ser480 show a composition bias toward low complexity. Residues Pro481–Pro493 show a composition bias toward pro residues. The segment at Cys503–Arg543 adopts an RING-type zinc-finger fold.

Interacts with JAG1, DLL1 and DLL4. As to expression, highest expression in brain, prostate and small intestine. In the brain the levels are higher in fetal than in adult stage. In the adult brain the highest levels are detected in the olfactory system, cerebellar cortex, optic nerve and the frontal lobe.

The protein resides in the cytoplasm. The enzyme catalyses S-ubiquitinyl-[E2 ubiquitin-conjugating enzyme]-L-cysteine + [acceptor protein]-L-lysine = [E2 ubiquitin-conjugating enzyme]-L-cysteine + N(6)-ubiquitinyl-[acceptor protein]-L-lysine.. It participates in protein modification; protein ubiquitination. Its function is as follows. E3 ubiquitin-protein ligase involved in regulation of the Notch pathway through influencing the stability and activity of several Notch ligands. In Homo sapiens (Human), this protein is E3 ubiquitin-protein ligase NEURL1B (NEURL1B).